We begin with the raw amino-acid sequence, 190 residues long: Vascular endothelial growth factor A (190 aa).

A signal peptide spans 1–26; it reads MNFLLSWVHWTLALLLYLHHAKWSQA. 3 disulfide bridges follow: cysteine 51–cysteine 93, cysteine 82–cysteine 127, and cysteine 86–cysteine 129. Asparagine 100 is a glycosylation site (N-linked (GlcNAc...) asparagine).

This sequence belongs to the PDGF/VEGF growth factor family. As to quaternary structure, homodimer; disulfide-linked. Also found as heterodimer with PGF. Interacts with NRP1. Interacts with isoform 2 of BSG. Interacts with CD82; this interaction inhibits VEGFA-mediated signaling pathway.

The protein resides in the secreted. In terms of biological role, growth factor active in angiogenesis, vasculogenesis and endothelial cell growth. Induces endothelial cell proliferation, promotes cell migration, inhibits apoptosis and induces permeabilization of blood vessels. Binds to the FLT1/VEGFR1 and KDR/VEGFR2 receptors, heparan sulfate and heparin. Binding to NRP1 receptor initiates a signaling pathway needed for motor neuron axon guidance and cell body migration, including for the caudal migration of facial motor neurons from rhombomere 4 to rhombomere 6 during embryonic development. Also binds the DEAR/FBXW7-AS1 receptor. In Mesocricetus auratus (Golden hamster), this protein is Vascular endothelial growth factor A (VEGFA).